The chain runs to 130 residues: Iron-sulfur cluster insertion protein ErpA (130 aa).

Residues C58, C122, and C124 each coordinate iron-sulfur cluster.

It belongs to the HesB/IscA family. As to quaternary structure, homodimer. It depends on iron-sulfur cluster as a cofactor.

Its function is as follows. Required for insertion of 4Fe-4S clusters for at least IspG. The chain is Iron-sulfur cluster insertion protein ErpA from Stenotrophomonas maltophilia (strain K279a).